Consider the following 309-residue polypeptide: tRNA dimethylallyltransferase (309 aa).

13 to 20 contributes to the ATP binding site; sequence GPTAVGKS. Substrate is bound at residue 15–20; that stretch reads TAVGKS.

Belongs to the IPP transferase family. In terms of assembly, monomer. Requires Mg(2+) as cofactor.

It catalyses the reaction adenosine(37) in tRNA + dimethylallyl diphosphate = N(6)-dimethylallyladenosine(37) in tRNA + diphosphate. Catalyzes the transfer of a dimethylallyl group onto the adenine at position 37 in tRNAs that read codons beginning with uridine, leading to the formation of N6-(dimethylallyl)adenosine (i(6)A). The chain is tRNA dimethylallyltransferase from Lacticaseibacillus casei (strain BL23) (Lactobacillus casei).